Consider the following 519-residue polypeptide: tRNA-2-methylthio-N(6)-dimethylallyladenosine synthase (519 aa).

The interval 1–23 (MNEQQRKQQSQIRTEQANVDRIK) is disordered. Polar residues predominate over residues 7–17 (KQQSQIRTEQA). The region spanning 76 to 194 (KKFLIRTYGC…LPHLVKEALF (119 aa)) is the MTTase N-terminal domain. Positions 85, 121, 155, 231, 235, and 238 each coordinate [4Fe-4S] cluster. The Radical SAM core domain occupies 217 to 450 (RKGKIKAWVN…VNKQSAASMK (234 aa)). One can recognise a TRAM domain in the interval 450 to 513 (KDYAGKKVKV…TWSLNGVMVE (64 aa)).

The protein belongs to the methylthiotransferase family. MiaB subfamily. As to quaternary structure, monomer. The cofactor is [4Fe-4S] cluster.

The protein localises to the cytoplasm. The enzyme catalyses N(6)-dimethylallyladenosine(37) in tRNA + (sulfur carrier)-SH + AH2 + 2 S-adenosyl-L-methionine = 2-methylsulfanyl-N(6)-dimethylallyladenosine(37) in tRNA + (sulfur carrier)-H + 5'-deoxyadenosine + L-methionine + A + S-adenosyl-L-homocysteine + 2 H(+). Functionally, catalyzes the methylthiolation of N6-(dimethylallyl)adenosine (i(6)A), leading to the formation of 2-methylthio-N6-(dimethylallyl)adenosine (ms(2)i(6)A) at position 37 in tRNAs that read codons beginning with uridine. The protein is tRNA-2-methylthio-N(6)-dimethylallyladenosine synthase of Oceanobacillus iheyensis (strain DSM 14371 / CIP 107618 / JCM 11309 / KCTC 3954 / HTE831).